The primary structure comprises 131 residues: Jacalin-related lectin 15 (131 aa).

A Jacalin-type lectin domain is found at 1 to 126 (MSTPSGSNPL…LTSLGAYFAP (126 aa)).

The protein belongs to the jacalin lectin family. In terms of tissue distribution, expressed in the vascular and surrounding tissues in cotyledons. Detected in root apical meristems.

The polypeptide is Jacalin-related lectin 15 (JAL15) (Arabidopsis thaliana (Mouse-ear cress)).